A 224-amino-acid polypeptide reads, in one-letter code: UPF0758 protein VCM66_0205 (224 aa).

A disordered region spans residues 1-20 (MSLKQLPTESMPREKLLQRG). In terms of domain architecture, MPN spans 102–224 (ALTSPQQTKL…VVSFAERGWI (123 aa)). Zn(2+) contacts are provided by histidine 173, histidine 175, and aspartate 186. The JAMM motif signature appears at 173-186 (HNHPSGVAEPSQAD).

It belongs to the UPF0758 family.

The chain is UPF0758 protein VCM66_0205 from Vibrio cholerae serotype O1 (strain M66-2).